The sequence spans 30 residues: ATP-dependent Clp protease ATP-binding subunit ClpA homolog (30 aa).

It belongs to the ClpA/ClpB family.

The protein localises to the plastid. It is found in the chloroplast. Functionally, may interact with a ClpP-like protease involved in degradation of denatured proteins in the chloroplast. This Pinus pinaster (Maritime pine) protein is ATP-dependent Clp protease ATP-binding subunit ClpA homolog.